The sequence spans 368 residues: Chaperone protein DnaJ (368 aa).

The region spanning 5-69 (DYYEVLGLSQ…QKRAQYDQFG (65 aa)) is the J domain. The CR-type zinc finger occupies 130–212 (GKELNVEIPV…CHGSGKVRKR (83 aa)). Zn(2+)-binding residues include cysteine 143, cysteine 146, cysteine 160, cysteine 163, cysteine 186, cysteine 189, cysteine 200, and cysteine 203. CXXCXGXG motif repeat units lie at residues 143–150 (CDTCKGSG), 160–167 (CKHCSGSG), 186–193 (CGHCSGTG), and 200–207 (CTTCHGSG).

Belongs to the DnaJ family. Homodimer. Requires Zn(2+) as cofactor.

Its subcellular location is the cytoplasm. Its function is as follows. Participates actively in the response to hyperosmotic and heat shock by preventing the aggregation of stress-denatured proteins and by disaggregating proteins, also in an autonomous, DnaK-independent fashion. Unfolded proteins bind initially to DnaJ; upon interaction with the DnaJ-bound protein, DnaK hydrolyzes its bound ATP, resulting in the formation of a stable complex. GrpE releases ADP from DnaK; ATP binding to DnaK triggers the release of the substrate protein, thus completing the reaction cycle. Several rounds of ATP-dependent interactions between DnaJ, DnaK and GrpE are required for fully efficient folding. Also involved, together with DnaK and GrpE, in the DNA replication of plasmids through activation of initiation proteins. The polypeptide is Chaperone protein DnaJ (Bacillus mycoides (strain KBAB4) (Bacillus weihenstephanensis)).